Reading from the N-terminus, the 285-residue chain is Meiotically up-regulated gene 125 protein (285 aa).

The protein resides in the cytoplasm. It is found in the nucleus. In terms of biological role, has a role in meiosis. In Schizosaccharomyces pombe (strain 972 / ATCC 24843) (Fission yeast), this protein is Meiotically up-regulated gene 125 protein (mug125).